A 76-amino-acid chain; its full sequence is MNKALFLCLVVLCAAVVFAAEDLQKAKHAPFKRAAPCFCSGKPGRGDLWILRGTCPGGYGYTSNCYKWPNICCYPH.

Positions 1–19 (MNKALFLCLVVLCAAVVFA) are cleaved as a signal peptide. The propeptide occupies 20 to 31 (AEDLQKAKHAPF). Cystine bridges form between Cys-37–Cys-72, Cys-39–Cys-65, and Cys-55–Cys-73.

It belongs to the sea anemone type 3 (BDS) potassium channel toxin family. As to expression, highly expressed in the ectodermal tissue from the distal and proximal tentacles, body wall, and oral disk.

It is found in the secreted. Its subcellular location is the nematocyst. Acts as a gating modifier on both Kv and Nav ion channels, and also acts on blood pressure. Voltage-dependently inhibits voltage-gated potassium channels Kv3 (Kv3.1/KCNC1, Kv3.2/KCNC2 and Kv3.4/KCNC4) and slows inactivation of the voltage-gated sodium channel Nav1.7/SCN9A. Inhibits all Kv3.1, Kv3.2 and Kv3.4 by about 50% when tested at a voltage of +40 mV (45%, 48% and 56%, respectively). May act by binding residues in voltage-sensing domains S3b and S4 of Kv3. On sodium channels, tests have been done on human Nav1.7/SCN9A (expressed in HEK293 cells) (EC(50)=3 nM) and rat SCG neurons that mostly carry Nav1.7 channels (EC(50)=300 nM). This toxin also reduces blood pressure. The protein is Kappa-actitoxin-Avd4a of Anemonia viridis (Snakelocks anemone).